The chain runs to 312 residues: Urease accessory protein UreD (312 aa).

A disordered region spans residues 1 to 50; sequence MRPLAPDARCAPSRPGRGPWYARRPVTTPSDPPAALREPPPPARRAGKAG.

This sequence belongs to the UreD family. UreD, UreF and UreG form a complex that acts as a GTP-hydrolysis-dependent molecular chaperone, activating the urease apoprotein by helping to assemble the nickel containing metallocenter of UreC. The UreE protein probably delivers the nickel.

The protein resides in the cytoplasm. Its function is as follows. Required for maturation of urease via the functional incorporation of the urease nickel metallocenter. In Sorangium cellulosum (strain So ce56) (Polyangium cellulosum (strain So ce56)), this protein is Urease accessory protein UreD.